The primary structure comprises 446 residues: Baeyer-Villiger monooxygenase dmxR6 (446 aa).

Belongs to the AflY oxidoreductase family.

The protein operates within secondary metabolite biosynthesis. Baeyer-Villiger monooxygenase; part of the gene cluster that mediates the biosynthesis of the dimeric xanthones cryptosporioptides. The pathway begins with the synthesis of atrochrysone thioester by the polyketide synthase dmx-nrPKS. The atrochrysone carboxyl ACP thioesterase dmxR1 then breaks the thioester bond and releases the atrochrysone carboxylic acid from dmx-nrPKS. Atrochrysone carboxylic acid is decarboxylated by the decarboxylase dmxR15, and oxidized by the anthrone oxygenase dmxR16 to yield emodin. Emodin is then reduced to emodin hydroquinone by the oxidoreductase dmxR7. A-ring reduction by the short chain dehydrogenase dmxR18, dehydration by the scytalone dehydratase-like protein dmxR17 and probable spontaneous re-oxidation, results in overall deoxygenation to chrysophanol. Baeyer-Villiger oxidation by the Baeyer-Villiger monooxygenase (BVMO) dmxR6 then yields monodictylactone in equilibrium with monodictyphenone. In the case of the cryptosporioptides biosynthesis, monodictylactone is reduced at C-12 to an alcohol (by the short chain dehydrogenases dmxR12 or dmxR8) and hydroxylated at C-5 by dmxR9, yielding the electron-rich aromatic which could eliminate H(2)O to form the ortho-quinonemethide, followed by tautomerisation to paraquinone and complete the formal reduction to produce the 10-methylgroup. Conjugate addition of C-4a-OH to the resulting paraquinone by the monooxygenase dmxR10 then gives cyclohexadienone, which is then reduced at C-5 by the short chain dehydrogenase dmxR3 to give the dihydroxanthone. The 6,7-epoxide in the cryptosporioptides could be introduced by the cytochrome P450 monooxygenase dmxL3. The highly reducing PKS dmxL2 manufactures butyrate, which is further carboxylated by dmxL1 to form ethylmalonate. It is not yet clear whether the carboxylation occurs while the butyrate is attached to the ACP of dmxL2, but this unusual fungal metabolite could then be esterified to O-5 by the O-acetyltransferase dmxR13. Finally, dimerization performed by dmxR5 gives the observed dimers cryptosporioptides A, B and C as the final products of the pathway. This Cryptosporiopsis sp. (strain 8999) protein is Baeyer-Villiger monooxygenase dmxR6.